We begin with the raw amino-acid sequence, 361 residues long: Fructose-bisphosphate aldolase (361 aa).

Position 2 is an N-acetylthreonine (T2). R56 and K147 together coordinate substrate. Residue E188 is the Proton acceptor of the active site. K230 serves as the catalytic Schiff-base intermediate with dihydroxyacetone-P.

Belongs to the class I fructose-bisphosphate aldolase family. In terms of assembly, homotetramer. In terms of tissue distribution, mainly expressed in the heads and partly in the thoraxes of adult flies. Expressed in all adult tissues. The Alpha-beta mRNA shows strong expression in the abdomens of adults. As to expression, mainly expressed in adult abdominal regions and is also expressed in lesser amounts in other parts of the body. The Beta-gamma mRNA is expressed in adult heads.

The enzyme catalyses beta-D-fructose 1,6-bisphosphate = D-glyceraldehyde 3-phosphate + dihydroxyacetone phosphate. The protein operates within carbohydrate degradation; glycolysis; D-glyceraldehyde 3-phosphate and glycerone phosphate from D-glucose: step 4/4. Its function is as follows. Enzyme of the glycolytic pathway. Glycolysis is essential in glial cells but not in neurons; neurons rely on the citric acid cycle for their energy needs, and on lactate and alanine secreted into the hemolymph by glial cells to fuel it. May take part in developmental stage-specific or tissue -specific sugar-phosphate metabolisms. Protein acts on two substrates fructose 1,6-bisphosphate and fructose 1-phosphate (like other class I aldolases). The chain is Fructose-bisphosphate aldolase from Drosophila melanogaster (Fruit fly).